Consider the following 296-residue polypeptide: Ribosomal protein L11 methyltransferase (296 aa).

S-adenosyl-L-methionine contacts are provided by Thr139, Gly163, Asp185, and Asn232.

This sequence belongs to the methyltransferase superfamily. PrmA family.

It localises to the cytoplasm. It catalyses the reaction L-lysyl-[protein] + 3 S-adenosyl-L-methionine = N(6),N(6),N(6)-trimethyl-L-lysyl-[protein] + 3 S-adenosyl-L-homocysteine + 3 H(+). Functionally, methylates ribosomal protein L11. This Picosynechococcus sp. (strain ATCC 27264 / PCC 7002 / PR-6) (Agmenellum quadruplicatum) protein is Ribosomal protein L11 methyltransferase.